A 1407-amino-acid polypeptide reads, in one-letter code: DNA-directed RNA polymerase subunit beta' (1407 aa).

Positions 70, 72, 85, and 88 each coordinate Zn(2+). Mg(2+) is bound by residues Asp460, Asp462, and Asp464. Cys814, Cys888, Cys895, and Cys898 together coordinate Zn(2+). Lys972 bears the N6-acetyllysine mark.

The protein belongs to the RNA polymerase beta' chain family. The RNAP catalytic core consists of 2 alpha, 1 beta, 1 beta' and 1 omega subunit. When a sigma factor is associated with the core the holoenzyme is formed, which can initiate transcription. Requires Mg(2+) as cofactor. It depends on Zn(2+) as a cofactor.

The enzyme catalyses RNA(n) + a ribonucleoside 5'-triphosphate = RNA(n+1) + diphosphate. DNA-dependent RNA polymerase catalyzes the transcription of DNA into RNA using the four ribonucleoside triphosphates as substrates. The protein is DNA-directed RNA polymerase subunit beta' of Shigella flexneri serotype 5b (strain 8401).